Here is a 1295-residue protein sequence, read N- to C-terminus: Unconventional myosin-VI (1295 aa).

The Myosin N-terminal SH3-like domain occupies 2-53 (EDGRPVWAPHPTEGFQMGNIVDIGPDSLTIEPLGQKGKTFLALINQVFPAEE). One can recognise a Myosin motor domain in the interval 57–771 (KDVEDNCSLM…KFAEFDQIMK (715 aa)). 151–158 (GESGAGKT) lines the ATP pocket. Serine 267 carries the post-translational modification Phosphoserine. Residues 273-317 (YLNRGCTRYFANKETDKQILQNRKTPEHLKAGSLKDPLLDDHGDF) are responsible for slow ATPase activity. A Phosphothreonine modification is found at threonine 405. A Phosphoserine modification is found at serine 604. Residues 651-673 (LNLLLDKLRSTGASFIRCIKPNL) form an actin-binding region. The interval 782–810 (KRVNHWLICSRWKKVQWCSLSVIKLKNKI) is required for binding calmodulin. An IQ domain is found at 813-842 (RAEACIKMQKTIRMWLCKRRHKPRIDGLVK). Positions 835 to 916 (PRIDGLVKVG…EVLLSALQKK (82 aa)) are three-helix bundle. The segment at 917–984 (KQQEEEAERL…EDDEKRIQAE (68 aa)) is SAH. The segment at 934 to 955 (EKERKRREEDEQRRRKEEEERR) is disordered. An interaction with TAX1BP1 and CALCOCO2/NDP52 region spans residues 1061 to 1286 (KEMSEILSRG…ESRQARPTYA (226 aa)). The tract at residues 1117–1119 (RRL) is interaction with OPTN. Position 1156 is a phosphoserine (serine 1156). An interaction with TOM1 region spans residues 1158–1286 (QQNPAAQLPA…ESRQARPTYA (129 aa)).

It belongs to the TRAFAC class myosin-kinesin ATPase superfamily. Myosin family. Homodimer; dimerization seems to implicate the unfolding of the three-helix bundle region creating an additional calmodulin binding site, and cargo binding. Able to function as a monomer under specific conditions in vitro. Forms a complex with CFTR and DAB2 in the apical membrane of epithelial cells. Component of the DISP/DOCK7-induced septin displacement complex, at least composed of DOCK7, LRCH3 and MYO6. Binding to calmodulin through a unique insert, not found in other myosins, located in the neck region between the motor domain and the IQ domain appears to contribute to the directionality reversal. This interaction occurs only if the C-terminal lobe of calmodulin is occupied by calcium. Interaction with F-actin/ACTN1 occurs only at the apical brush border domain of the proximal tubule cells. Interacts with DAB2. In vitro, the C-terminal globular tail binds a C-terminal region of DAB2. Interacts with CFTR. Interacts with CABP5. Interacts (via residues 1158-1286) with TOM1 (via residues 392-463). Interacts (via residues 1060-1285) with OPTN. Interacts (via residues 1060-1285) with TAX1BP1 and CALCOCO2/NDP52. Interacts with TOM1L2. Interacts with CLIC5; may work together in a complex which also includes RDX and MYO6 to stabilize linkages between the plasma membrane and subjacent actin cytoskeleton at the base of stereocilia. Post-translationally, phosphorylation in the motor domain, induced by EGF, results in translocation of MYO6 from the cell surface to membrane ruffles and affects F-actin dynamics. Phosphorylated in vitro by p21-activated kinase (PAK). In terms of tissue distribution, expressed in the retina (at protein level).

It localises to the golgi apparatus. Its subcellular location is the trans-Golgi network membrane. It is found in the nucleus. The protein localises to the cytoplasm. The protein resides in the perinuclear region. It localises to the membrane. Its subcellular location is the clathrin-coated pit. It is found in the cytoplasmic vesicle. The protein localises to the clathrin-coated vesicle. The protein resides in the cell projection. It localises to the filopodium. Its subcellular location is the ruffle membrane. It is found in the microvillus. The protein localises to the cytosol. Myosins are actin-based motor molecules with ATPase activity. Unconventional myosins serve in intracellular movements. Myosin 6 is a reverse-direction motor protein that moves towards the minus-end of actin filaments. Has slow rate of actin-activated ADP release due to weak ATP binding. Functions in a variety of intracellular processes such as vesicular membrane trafficking and cell migration. Required for the structural integrity of the Golgi apparatus via the p53-dependent pro-survival pathway. Appears to be involved in a very early step of clathrin-mediated endocytosis in polarized epithelial cells. Together with TOM1, mediates delivery of endocytic cargo to autophagosomes thereby promoting autophagosome maturation and driving fusion with lysosomes. Links TOM1 with autophagy receptors, such as TAX1BP1; CALCOCO2/NDP52 and OPTN. May act as a regulator of F-actin dynamics. As part of the DISP complex, may regulate the association of septins with actin and thereby regulate the actin cytoskeleton. May play a role in transporting DAB2 from the plasma membrane to specific cellular targets. May play a role in the extension and network organization of neurites. Required for structural integrity of inner ear hair cells. Required for the correct localization of CLIC5 and RDX at the stereocilium base. Modulates RNA polymerase II-dependent transcription. The sequence is that of Unconventional myosin-VI from Bos taurus (Bovine).